The sequence spans 931 residues: Netrin receptor UNC5C (931 aa).

Residues 1-40 (MRKGLRATAARCGLGLGYLLQMLVLPALALLSASGTGSAA) form the signal peptide. The Extracellular portion of the chain corresponds to 41-380 (QDDEFFHELP…APDSDDVALY (340 aa)). The 98-residue stretch at 62 to 159 (PHFLIEPEEA…AGTTKSRKAY (98 aa)) folds into the Ig-like domain. Intrachain disulfides connect cysteine 83/cysteine 144, cysteine 95/cysteine 142, cysteine 188/cysteine 239, cysteine 272/cysteine 309, cysteine 276/cysteine 313, cysteine 287/cysteine 299, cysteine 328/cysteine 362, cysteine 332/cysteine 367, and cysteine 340/cysteine 352. In terms of domain architecture, Ig-like C2-type spans 161-256 (RIAYLRKTFE…KRKSTTATVI (96 aa)). N-linked (GlcNAc...) asparagine glycosylation is present at asparagine 236. TSP type-1 domains lie at 260–314 (NGGW…TLCP) and 316–368 (DGRW…GLCM). N-linked (GlcNAc...) asparagine glycosylation occurs at asparagine 361. Residues 381-401 (VGIVIAVTVCLAITVVVALFV) form a helical membrane-spanning segment. At 402-931 (YRKNHRDFES…VVSLAAEGQY (530 aa)) the chain is on the cytoplasmic side. Positions 402–931 (YRKNHRDFES…VVSLAAEGQY (530 aa)) are required for netrin-mediated axon repulsion of neuronal growth cones. Serine 502 carries the phosphoserine modification. The ZU5 domain occupies 530-673 (CTAFGTFNSL…LSTYALVGQS (144 aa)). At tyrosine 568 the chain carries Phosphotyrosine. Residues 694–712 (SLEYSIRVYCLDDTQDALK) are interaction with DCC. The 80-residue stretch at 850–929 (QKLCSSLDAP…ETVVSLAAEG (80 aa)) folds into the Death domain.

The protein belongs to the unc-5 family. As to quaternary structure, interacts with DCC (via cytoplasmic domain). Interacts (tyrosine phosphorylated form) with PTPN11. Interacts (via extracellular domain) with FLRT3 (via extracellular domain). Interacts (via Ig-like C2-type domain) with DSCAM (via extracellular domain). Interacts (via death domain) with DAPK1. Interacts (via cytoplasmic domain) with TUBB3; this interaction is decreased by NTN1/Netrin-1. Post-translationally, phosphorylated on different cytoplasmic tyrosine residues. Phosphorylation of Tyr-568 leads to an interaction with PTPN11 phosphatase, suggesting that its activity is regulated by phosphorylation/dephosphorylation. Tyrosine phosphorylation is netrin-dependent. In terms of processing, proteolytically cleaved by caspases during apoptosis. The cleavage does not take place when the receptor is associated with netrin ligand. Its cleavage by caspases is required to induce apoptosis. Expressed in cortical and cerebellar neurons, including cells of the external and internal granular layer and of the Purkinje cell layer (at protein level). Mainly expressed in regions of differentiating neurons. Highly expressed in brain and lung. Expressed in the cerebellum and the neurons of the hippocampus, with enrichment in neurons of the CA3 hippocampal pyramidal layer. Weakly expressed in testis, ovary, spleen, thymus and bladder. Expressed at very low level in kidney, intestine and salivary gland.

It is found in the cell membrane. The protein localises to the cell surface. It localises to the synapse. The protein resides in the synaptosome. Its subcellular location is the cell projection. It is found in the dendrite. The protein localises to the axon. It localises to the growth cone. The protein resides in the lamellipodium. Its subcellular location is the filopodium. In terms of biological role, receptor for netrin required for axon guidance. Mediates axon repulsion of neuronal growth cones in the developing nervous system upon ligand binding. NTN1/Netrin-1 binding might cause dissociation of UNC5C from polymerized TUBB3 in microtubules and thereby lead to increased microtubule dynamics and axon repulsion. Axon repulsion in growth cones may also be caused by its association with DCC that may trigger signaling for repulsion. Might also collaborate with DSCAM in NTN1-mediated axon repulsion independently of DCC. Also involved in corticospinal tract axon guidance independently of DCC. Involved in dorsal root ganglion axon projection towards the spinal cord. It also acts as a dependence receptor required for apoptosis induction when not associated with netrin ligand. This is Netrin receptor UNC5C (Unc5c) from Mus musculus (Mouse).